Consider the following 321-residue polypeptide: Arginine-hydroxylase NDUFAF5, mitochondrial (321 aa).

The N-terminal 25 residues, 1–25 (MNVSVKSLRGVSRTWRSFSSRQGMN), are a transit peptide targeting the mitochondrion.

Belongs to the methyltransferase superfamily. In terms of assembly, interacts with NDUFS7.

Its subcellular location is the mitochondrion inner membrane. Its function is as follows. Arginine hydroxylase that mediates hydroxylation of 'Arg-111' of NDUFS7 and is involved in the assembly of mitochondrial NADH:ubiquinone oxidoreductase complex (complex I, MT-ND1) at early stages. May also have methyltransferase activity. The polypeptide is Arginine-hydroxylase NDUFAF5, mitochondrial (Danio rerio (Zebrafish)).